Here is a 448-residue protein sequence, read N- to C-terminus: Thymidine phosphorylase (448 aa).

The protein belongs to the thymidine/pyrimidine-nucleoside phosphorylase family. In terms of assembly, homodimer.

It carries out the reaction thymidine + phosphate = 2-deoxy-alpha-D-ribose 1-phosphate + thymine. Its pathway is pyrimidine metabolism; dTMP biosynthesis via salvage pathway; dTMP from thymine: step 1/2. Functionally, the enzymes which catalyze the reversible phosphorolysis of pyrimidine nucleosides are involved in the degradation of these compounds and in their utilization as carbon and energy sources, or in the rescue of pyrimidine bases for nucleotide synthesis. The sequence is that of Thymidine phosphorylase from Vibrio cholerae serotype O1 (strain ATCC 39315 / El Tor Inaba N16961).